The sequence spans 388 residues: Phosphoglycerate kinase (388 aa).

Substrate-binding positions include 24 to 26 (DLN), R37, 56 to 59 (RGGR), R117, and R165. The segment at 26–136 (NVPLDSDGEQ…RRPRNVQGRR (111 aa)) is disordered. Over residues 34–55 (EQGRITDPGPDHRVGADVERTG) the composition is skewed to basic and acidic residues. Residues 102-136 (GGHRRPGPRRGVDRRRRPAAGKHPVRRPRNVQGRR) show a composition bias toward basic residues. Residues K215, G303, E334, and 363–366 (GGDS) contribute to the ATP site.

Belongs to the phosphoglycerate kinase family. In terms of assembly, monomer.

The protein localises to the cytoplasm. The enzyme catalyses (2R)-3-phosphoglycerate + ATP = (2R)-3-phospho-glyceroyl phosphate + ADP. It functions in the pathway carbohydrate degradation; glycolysis; pyruvate from D-glyceraldehyde 3-phosphate: step 2/5. The sequence is that of Phosphoglycerate kinase (pgk) from Mycobacterium avium.